Here is a 246-residue protein sequence, read N- to C-terminus: Large ribosomal subunit protein uL3 (246 aa).

Disordered stretches follow at residues 140 to 162 (SHRS…NKKM) and 214 to 246 (ADVP…EENA). Position 151 is an N5-methylglutamine (glutamine 151). Over residues 234–246 (EAAPEAPASEENA) the composition is skewed to low complexity.

Belongs to the universal ribosomal protein uL3 family. As to quaternary structure, part of the 50S ribosomal subunit. Forms a cluster with proteins L14 and L19. Post-translationally, methylated by PrmB.

In terms of biological role, one of the primary rRNA binding proteins, it binds directly near the 3'-end of the 23S rRNA, where it nucleates assembly of the 50S subunit. This chain is Large ribosomal subunit protein uL3, found in Methylorubrum extorquens (strain CM4 / NCIMB 13688) (Methylobacterium extorquens).